A 101-amino-acid polypeptide reads, in one-letter code: NADH-quinone oxidoreductase subunit K (101 aa).

A run of 3 helical transmembrane segments spans residues leucine 4–valine 24, isoleucine 29–alanine 49, and isoleucine 61–leucine 81.

Belongs to the complex I subunit 4L family. As to quaternary structure, NDH-1 is composed of 14 different subunits. Subunits NuoA, H, J, K, L, M, N constitute the membrane sector of the complex.

The protein resides in the cell inner membrane. The enzyme catalyses a quinone + NADH + 5 H(+)(in) = a quinol + NAD(+) + 4 H(+)(out). In terms of biological role, NDH-1 shuttles electrons from NADH, via FMN and iron-sulfur (Fe-S) centers, to quinones in the respiratory chain. The immediate electron acceptor for the enzyme in this species is believed to be ubiquinone. Couples the redox reaction to proton translocation (for every two electrons transferred, four hydrogen ions are translocated across the cytoplasmic membrane), and thus conserves the redox energy in a proton gradient. This is NADH-quinone oxidoreductase subunit K from Ruthia magnifica subsp. Calyptogena magnifica.